Reading from the N-terminus, the 452-residue chain is ADP-dependent glucose/glucosamine kinase (452 aa).

Positions 1–452 constitute an ADPK domain; that stretch reads MSWDEMYRDA…AFVSEFSLSS (452 aa). D-glucose is bound by residues D33, E87, 111 to 112, and H174; that span reads GQ. A Mg(2+)-binding site is contributed by E264. N290 is an ADP binding site. Position 293 (E293) interacts with Mg(2+). Residues 339–340, V426, and G436 each bind ADP; that span reads HT. A D-glucose-binding site is contributed by D437. Mg(2+) is bound at residue D437. D437 (proton acceptor) is an active-site residue.

It belongs to the ADP-dependent glucokinase family. Mg(2+) serves as cofactor.

It is found in the cytoplasm. The enzyme catalyses D-glucose + ADP = D-glucose 6-phosphate + AMP + H(+). The catalysed reaction is D-glucosamine + ADP = D-glucosamine 6-phosphate + AMP + H(+). It functions in the pathway carbohydrate degradation; glycolysis. Catalyzes the ADP-dependent phosphorylation of D-glucose to D-glucose 6-phosphate and glucosamine to glucosamine 6-phosphate. The protein is ADP-dependent glucose/glucosamine kinase of Pyrococcus abyssi (strain GE5 / Orsay).